We begin with the raw amino-acid sequence, 227 residues long: MLTVIEDLLSKKEVTQFTQALDKGQWLDGKHTAGSQASKVKYNQQLDDGSALAIELRNTVIRKLSGNALFMSSALPNKIYPPKFNRYQGGEHYGLHVDASVMPIPNSHQMLRTDLSATLFLSEPKTYDGGELSIETQFGLQQIKLNAGSVILYPANSLHQVNPVTKGRRTASFFWIESLVRSNDQRSMLFDLDQSIQALTVELGSNDAEVKRLTGVYHNLMRSWATC.

Positions 78–178 (KIYPPKFNRY…RTASFFWIES (101 aa)) constitute a Fe2OG dioxygenase domain. Fe cation contacts are provided by H96, D98, and H159. 2-oxoglutarate is bound at residue R169.

Fe(2+) is required as a cofactor. Requires L-ascorbate as cofactor.

This chain is PKHD-type hydroxylase Patl_2273, found in Pseudoalteromonas atlantica (strain T6c / ATCC BAA-1087).